Consider the following 121-residue polypeptide: Holo-[acyl-carrier-protein] synthase (121 aa).

Residues aspartate 6 and glutamate 55 each contribute to the Mg(2+) site.

It belongs to the P-Pant transferase superfamily. AcpS family. Mg(2+) is required as a cofactor.

The protein resides in the cytoplasm. It catalyses the reaction apo-[ACP] + CoA = holo-[ACP] + adenosine 3',5'-bisphosphate + H(+). Transfers the 4'-phosphopantetheine moiety from coenzyme A to a Ser of acyl-carrier-protein. In Chloroherpeton thalassium (strain ATCC 35110 / GB-78), this protein is Holo-[acyl-carrier-protein] synthase.